The chain runs to 1133 residues: SH3 and PX domain-containing protein 2A (1133 aa).

Positions 4 to 128 constitute a PX domain; the sequence is YCVQDATVVD…RFFEARPEDV (125 aa). One can recognise an SH3 1 domain in the interval 166–225; it reads MILEQYVVVSNYKKQENSELSLQAGEVVDVIEKNESGWWFVSTSEEQGWVPATYLEAQNG. T256 carries the post-translational modification Phosphothreonine. The SH3 2 domain occupies 266-325; it reads SREEKYVTVQPYTSQSKDEIGFEKGVTVEVIRKNLEGWWYIRYLGKEGWAPASYLKKAKD. S406 and S421 each carry phosphoserine. Disordered regions lie at residues 415-446, 505-840, 899-924, and 941-964; these read QRAQISSPNLRTRPPPRRESSLGFQLPKPPEP, RKKP…EWEG, NEQPDPSGKELDTVPAKGRQNEGKSD, and QSKKATPPIPSKPPGGFGKTSGTP. One can recognise an SH3 3 domain in the interval 448–507; sequence SVEVEYYTIAEFQSCISDGISFRGGQKAEVIDKNSGGWWYVQIGEKEGWAPASYIDKRKK. Residues 546–555 show a composition bias toward basic and acidic residues; the sequence is DSPRKLKYEE. Residues S547 and S567 each carry the phosphoserine modification. Positions 567–576 are enriched in acidic residues; sequence SEPELSEEPV. Over residues 577 to 586 the composition is skewed to basic and acidic residues; that stretch reads EDRASGERRP. S593 bears the Phosphoserine mark. A compositionally biased stretch (acidic residues) spans 608–620; that stretch reads SSEDVALEEETIY. Composition is skewed to low complexity over residues 634–652, 658–670, and 686–715; these read SARGSSGDSDSPGSSSLSL, PKSGSPKSSSLLK, and SSASFSSSITINTTCCSSSSSSSSSLSKTS. S644 is modified (phosphoserine). T731 is modified (phosphothreonine). S767, S769, and S819 each carry phosphoserine. T829 is modified (phosphothreonine). Positions 840–899 constitute an SH3 4 domain; that stretch reads GPATSYMTCSAYQKVQDSEISFPAGVEVQVLEKQESGWWYVRFGELEGWAPSHYLVLDEN. Residues 917-946 adopt a coiled-coil conformation; it reads RQNEGKSDSLEKIERRVQALNTVNQSKKAT. S1002, S1016, S1017, and S1038 each carry phosphoserine. The segment at 1029–1059 is disordered; the sequence is KGRLAERAASQGSDSPLLPAQRNSIPVSPVR. Positions 1072-1133 constitute an SH3 5 domain; that stretch reads NLKDVYVSIA…VPSNYLEKKN (62 aa).

Belongs to the SH3PXD2 family. Interacts (via N-terminus) with CYBA. Interacts with ADAM12, ADAM15 and ADAM19. Interacts with NOXO1. Interacts (via SH3 domains) with NOXA1. Interacts with FASLG. Interacts (via PX domain) with RAB40B (GTP-bound); interaction promotes invadopodia-mediated extracellular matrix degradation. In terms of processing, tyrosine phosphorylated by SRC. Phosphorylation plays a regulatory role in the protein localization. The intramolecular interaction of the PX domain with the third SH3 domain maintains the protein in the cytoplasm and phosphorylation disrupts this interaction, resulting in the redistribution of the protein from cytoplasm to the perimembrane region. Phosphorylated on serine upon DNA damage, probably by ATM or ATR. In terms of tissue distribution, found in several cancer cell lines, particularly invasive breast carcinomas and melanomas.

The protein resides in the cytoplasm. It localises to the cell projection. It is found in the podosome. In terms of biological role, adapter protein involved in invadopodia and podosome formation, extracellular matrix degradation and invasiveness of some cancer cells. Binds matrix metalloproteinases (ADAMs), NADPH oxidases (NOXs) and phosphoinositides. Acts as an organizer protein that allows NOX1- or NOX3-dependent reactive oxygen species (ROS) generation and ROS localization. In association with ADAM12, mediates the neurotoxic effect of amyloid-beta peptide. This is SH3 and PX domain-containing protein 2A from Homo sapiens (Human).